Consider the following 863-residue polypeptide: Leucine--tRNA ligase (863 aa).

The short motif at 42 to 52 (PYPSGKIHMGH) is the 'HIGH' region element. Residues 618-622 (KMSKS) carry the 'KMSKS' region motif. Residue Lys621 coordinates ATP.

The protein belongs to the class-I aminoacyl-tRNA synthetase family.

It is found in the cytoplasm. It catalyses the reaction tRNA(Leu) + L-leucine + ATP = L-leucyl-tRNA(Leu) + AMP + diphosphate. The polypeptide is Leucine--tRNA ligase (Desulforapulum autotrophicum (strain ATCC 43914 / DSM 3382 / VKM B-1955 / HRM2) (Desulfobacterium autotrophicum)).